Reading from the N-terminus, the 395-residue chain is Elongation factor Tu (395 aa).

Residues 10-204 enclose the tr-type G domain; sequence KPHVNIGTIG…AIDNWIPLPQ (195 aa). Positions 19–26 are G1; the sequence is GHVDHGKT. 19–26 is a GTP binding site; sequence GHVDHGKT. A Mg(2+)-binding site is contributed by threonine 26. Residues 60–64 form a G2 region; the sequence is GITIN. Residues 81–84 are G3; that stretch reads DCPG. Residues 81–85 and 136–139 contribute to the GTP site; these read DCPGH and NKVD. The tract at residues 136 to 139 is G4; that stretch reads NKVD. Residues 174–176 are G5; the sequence is SAL.

It belongs to the TRAFAC class translation factor GTPase superfamily. Classic translation factor GTPase family. EF-Tu/EF-1A subfamily. Monomer.

Its subcellular location is the cytoplasm. It carries out the reaction GTP + H2O = GDP + phosphate + H(+). GTP hydrolase that promotes the GTP-dependent binding of aminoacyl-tRNA to the A-site of ribosomes during protein biosynthesis. This Azobacteroides pseudotrichonymphae genomovar. CFP2 protein is Elongation factor Tu.